A 622-amino-acid chain; its full sequence is Prolactin receptor (622 aa).

The first 24 residues, 1–24 (MKENVASATVFTLLLFLNTCLLNG), serve as a signal peptide directing secretion. The Extracellular portion of the chain corresponds to 25 to 234 (QLPPGKPEIF…QIPSDFTMND (210 aa)). Fibronectin type-III domains lie at 27–128 (PPGK…VQPD) and 129–229 (PPLE…IPSD). A disulfide bridge links cysteine 36 with cysteine 46. Residue asparagine 59 is glycosylated (N-linked (GlcNAc...) asparagine). A disulfide bond links cysteine 75 and cysteine 86. The N-linked (GlcNAc...) asparagine glycan is linked to asparagine 104. Residues aspartate 211 and histidine 212 each contribute to the Zn(2+) site. Positions 215 to 219 (WSAWS) match the WSXWS motif motif. An N-linked (GlcNAc...) asparagine glycan is attached at asparagine 233. Residues 235–258 (TTVWISVAVLSAVICLIIVWAVAL) traverse the membrane as a helical segment. Residues 259–622 (KGYSMVTCIF…DPACFTHSFH (364 aa)) are Cytoplasmic-facing. The short motif at 267 to 275 (IFPPVPGPK) is the Box 1 motif element. 3 disordered regions span residues 326 to 378 (MSVH…YDPE), 461 to 505 (SSQT…GSAK), and 520 to 545 (ALSLLPKQRENSGKPKKPGTPENNKE). The segment covering 466 to 486 (KSREEGKATQQREVESFHSET) has biased composition (basic and acidic residues).

The protein belongs to the type I cytokine receptor family. Type 1 subfamily. Homodimer upon hormone binding. Interacts with SMARCA1. Interacts with GH1. Interacts with CSH. Interacts with NEK3 and VAV2 and this interaction is prolactin-dependent. In terms of tissue distribution, expressed in breast, placenta, kidney, liver and pancreas.

It localises to the membrane. Its subcellular location is the secreted. Its function is as follows. This is a receptor for the anterior pituitary hormone prolactin (PRL). Acts as a prosurvival factor for spermatozoa by inhibiting sperm capacitation through suppression of SRC kinase activation and stimulation of AKT. Isoform 4 is unable to transduce prolactin signaling. Isoform 6 is unable to transduce prolactin signaling. This Homo sapiens (Human) protein is Prolactin receptor (PRLR).